The primary structure comprises 533 residues: Beta-1,4 N-acetylgalactosaminyltransferase 1 (533 aa).

Residues 1 to 7 (MRLDRRA) are Cytoplasmic-facing. Residues 8-25 (LYALVLLLACASLGLLYA) form a helical; Signal-anchor for type II membrane protein membrane-spanning segment. Over 26-533 (STRDAPGLPN…KHRLQCMTAE (508 aa)) the chain is Lumenal. N-linked (GlcNAc...) asparagine glycosylation is found at Asn-79 and Asn-274. Cys-429 and Cys-476 form a disulfide bridge.

This sequence belongs to the glycosyltransferase 2 family. Homodimer; disulfide-linked. In terms of tissue distribution, strongly expressed in brain, testis, spleen, and to a lesser extent in liver.

The protein resides in the golgi apparatus membrane. It carries out the reaction a ganglioside GM3 (d18:1(4E)) + UDP-N-acetyl-alpha-D-galactosamine = a ganglioside GM2 (d18:1(4E)) + UDP + H(+). The enzyme catalyses a ganglioside GD3 (d18:1(4E)) + UDP-N-acetyl-alpha-D-galactosamine = a ganglioside GD2 (d18:1(4E)) + UDP + H(+). The catalysed reaction is a ganglioside GM3 + UDP-N-acetyl-alpha-D-galactosamine = a ganglioside GM2 + UDP + H(+). It catalyses the reaction a ganglioside GD3 + UDP-N-acetyl-alpha-D-galactosamine = a ganglioside GD2 + UDP + H(+). It carries out the reaction a ganglioside GD1a + UDP-N-acetyl-alpha-D-galactosamine = a ganglioside GalNAc-GD1a + UDP + H(+). The enzyme catalyses a ganglioside GT3 (d18:1(4E)) + UDP-N-acetyl-alpha-D-galactosamine = a ganglioside GT2 (d18:1(4E)) + UDP + H(+). The catalysed reaction is a beta-D-Gal-(1-&gt;4)-beta-D-Glc-(1&lt;-&gt;1)-Cer(d18:1(4E)) + UDP-N-acetyl-alpha-D-galactosamine = a ganglioside GA2 (d18:1(4E)) + UDP + H(+). It catalyses the reaction a neolactoside IV(3)-alpha-NeuGc-nLc4Cer + UDP-N-acetyl-alpha-D-galactosamine = a neolactoside IV(4)-beta-GalNAc-IV(3)-alpha-NeuGc-nLc4Cer + UDP + H(+). It functions in the pathway sphingolipid metabolism. Functionally, involved in the biosynthesis of gangliosides GM2, GD2, GT2 and GA2 from GM3, GD3, GT3 and GA3, respectively. This Rattus norvegicus (Rat) protein is Beta-1,4 N-acetylgalactosaminyltransferase 1.